A 272-amino-acid chain; its full sequence is MTESLEMGKSIDFNVQTFDFKSAQFYLDRAYANAPFIHCLTNNTTKFFVANALLAIGAKPAMVESWQEVVEFSQRAANVVMNLDSLTDERLRSLSMSAQVAHDHGKWWVFDPAAVSDILSYRSGFARELLRYYPRVIRGNASEISYLNDTYGRRSFENVMSSSEAIEAAVKLAIHQRAVVVVTGEIDYVTDGETILAVRGGHPFLGRVCGTGCVLSAMIASTVLCGDVLYGAASACALMKRAGERAGLTTSGLGSFYVALLDNLTFPMRYQD.

M62 is a substrate binding site. Residues R138 and T183 each coordinate ATP. G210 contributes to the substrate binding site.

The protein belongs to the Thz kinase family. Mg(2+) is required as a cofactor.

The catalysed reaction is 5-(2-hydroxyethyl)-4-methylthiazole + ATP = 4-methyl-5-(2-phosphooxyethyl)-thiazole + ADP + H(+). Its pathway is cofactor biosynthesis; thiamine diphosphate biosynthesis; 4-methyl-5-(2-phosphoethyl)-thiazole from 5-(2-hydroxyethyl)-4-methylthiazole: step 1/1. Functionally, catalyzes the phosphorylation of the hydroxyl group of 4-methyl-5-beta-hydroxyethylthiazole (THZ). The chain is Hydroxyethylthiazole kinase from Dichelobacter nodosus (strain VCS1703A).